We begin with the raw amino-acid sequence, 294 residues long: GTPase Era (294 aa).

One can recognise an Era-type G domain in the interval 3–170 (KSGFISIIGR…LELMIKYMPE (168 aa)). Positions 11–18 (GRPNVGKS) are G1. A GTP-binding site is contributed by 11–18 (GRPNVGKS). The interval 37 to 41 (QTTRN) is G2. The G3 stretch occupies residues 58–61 (DTPG). GTP is bound by residues 58 to 62 (DTPGI) and 120 to 123 (NKID). The segment at 120–123 (NKID) is G4. The segment at 149–151 (ISA) is G5. The KH type-2 domain maps to 201-278 (LSEEVPHGIA…NLKVWVKVKK (78 aa)).

The protein belongs to the TRAFAC class TrmE-Era-EngA-EngB-Septin-like GTPase superfamily. Era GTPase family. Monomer.

It is found in the cytoplasm. The protein resides in the cell membrane. In terms of biological role, an essential GTPase that binds both GDP and GTP, with rapid nucleotide exchange. Plays a role in 16S rRNA processing and 30S ribosomal subunit biogenesis and possibly also in cell cycle regulation and energy metabolism. The polypeptide is GTPase Era (Clostridium novyi (strain NT)).